We begin with the raw amino-acid sequence, 212 residues long: Glycerol-3-phosphate acyltransferase (212 aa).

5 helical membrane passes run 5-25, 53-73, 80-100, 112-132, and 138-158; these read ALGM…ILVC, VAAA…VWLA, PLYL…PVFF, FGAI…TWLL, and GYSS…VWWF.

It belongs to the PlsY family. As to quaternary structure, probably interacts with PlsX.

The protein resides in the cell inner membrane. It carries out the reaction an acyl phosphate + sn-glycerol 3-phosphate = a 1-acyl-sn-glycero-3-phosphate + phosphate. It participates in lipid metabolism; phospholipid metabolism. Functionally, catalyzes the transfer of an acyl group from acyl-phosphate (acyl-PO(4)) to glycerol-3-phosphate (G3P) to form lysophosphatidic acid (LPA). This enzyme utilizes acyl-phosphate as fatty acyl donor, but not acyl-CoA or acyl-ACP. The chain is Glycerol-3-phosphate acyltransferase from Serratia proteamaculans (strain 568).